A 337-amino-acid chain; its full sequence is F420-dependent glucose-6-phosphate dehydrogenase (337 aa).

Asp-40 provides a ligand contact to coenzyme F420-(gamma-Glu)n. His-41 acts as the Proton donor in catalysis. Residues Thr-77 and 108-109 (SG) contribute to the coenzyme F420-(gamma-Glu)n site. The Proton acceptor role is filled by Glu-110. Coenzyme F420-(gamma-Glu)n-binding positions include Asn-113, 178–179 (GG), and 181–182 (VV). 4 residues coordinate substrate: Thr-196, Lys-199, Lys-260, and Arg-284.

It belongs to the F420-dependent glucose-6-phosphate dehydrogenase family. In terms of assembly, homodimer.

It catalyses the reaction oxidized coenzyme F420-(gamma-L-Glu)(n) + D-glucose 6-phosphate + H(+) = 6-phospho-D-glucono-1,5-lactone + reduced coenzyme F420-(gamma-L-Glu)(n). In terms of biological role, catalyzes the coenzyme F420-dependent oxidation of glucose 6-phosphate (G6P) to 6-phosphogluconolactone. This Rhodococcus erythropolis (strain PR4 / NBRC 100887) protein is F420-dependent glucose-6-phosphate dehydrogenase.